Reading from the N-terminus, the 64-residue chain is Large ribosomal subunit protein bL28C (64 aa).

It belongs to the bacterial ribosomal protein bL28 family.

The chain is Large ribosomal subunit protein bL28C from Mycobacterium tuberculosis (strain ATCC 25618 / H37Rv).